The sequence spans 531 residues: Achacin (531 aa).

A signal peptide spans 1 to 22 (MLLLNSALFILCLVCWLPGTSS). Positions 23–29 (SRVLTRR) are excised as a propeptide. N-linked (GlcNAc...) asparagine glycosylation is found at Asn112, Asn150, Asn308, and Asn392.

To A.kurodai aplysianin-A. In terms of assembly, homodimer. As to expression, collar tissue.

Its function is as follows. Antibacterial glycoprotein. The polypeptide is Achacin (Lissachatina fulica (Giant African land snail)).